We begin with the raw amino-acid sequence, 193 residues long: Ion-translocating oxidoreductase complex subunit A (193 aa).

Transmembrane regions (helical) follow at residues 5–25 (LLLL…FLGL), 39–59 (IGMG…SYLI), 63–83 (ILAP…VIAV), 102–122 (VLGI…VALL), 134–154 (IIYG…FSAM), and 171–191 (SIAM…TGLV).

The protein belongs to the NqrDE/RnfAE family. As to quaternary structure, the complex is composed of six subunits: RnfA, RnfB, RnfC, RnfD, RnfE and RnfG.

The protein localises to the cell inner membrane. Functionally, part of a membrane-bound complex that couples electron transfer with translocation of ions across the membrane. This Aliivibrio salmonicida (strain LFI1238) (Vibrio salmonicida (strain LFI1238)) protein is Ion-translocating oxidoreductase complex subunit A.